A 602-amino-acid polypeptide reads, in one-letter code: Phosphoenolpyruvate carboxykinase [GTP] (602 aa).

Substrate is bound by residues R89 and 211 to 213; that span reads YAG. Positions 220 and 239 each coordinate Mn(2+). S260 lines the substrate pocket. 261 to 266 is a binding site for GTP; the sequence is GSGKTS. The active site involves S262. Residue D277 participates in Mn(2+) binding. 367–369 serves as a coordination point for substrate; that stretch reads NAR. Residues R369 and R400 each coordinate GTP.

This sequence belongs to the phosphoenolpyruvate carboxykinase [GTP] family. It depends on Mn(2+) as a cofactor.

The protein resides in the cytoplasm. The catalysed reaction is oxaloacetate + GTP = phosphoenolpyruvate + GDP + CO2. The protein operates within carbohydrate biosynthesis; gluconeogenesis. Functionally, catalyzes the conversion of oxaloacetate (OAA) to phosphoenolpyruvate (PEP), the rate-limiting step in the metabolic pathway that produces glucose from lactate and other precursors derived from the citric acid cycle. In Sulfurisphaera tokodaii (strain DSM 16993 / JCM 10545 / NBRC 100140 / 7) (Sulfolobus tokodaii), this protein is Phosphoenolpyruvate carboxykinase [GTP].